A 500-amino-acid chain; its full sequence is Anthranilate synthase component 1 (500 aa).

Residues Ser-49 and 276-278 (PFM) each bind L-tryptophan. 311 to 312 (GT) contributes to the chorismate binding site. Glu-338 lines the Mg(2+) pocket. Residues Tyr-426, Arg-446, 460–462 (GGG), and Gly-462 each bind chorismate. Position 475 (Glu-475) interacts with Mg(2+).

This sequence belongs to the anthranilate synthase component I family. In terms of assembly, heterotetramer consisting of two non-identical subunits: a beta subunit (TrpG) and a large alpha subunit (TrpE). Mg(2+) serves as cofactor.

The catalysed reaction is chorismate + L-glutamine = anthranilate + pyruvate + L-glutamate + H(+). The protein operates within amino-acid biosynthesis; L-tryptophan biosynthesis; L-tryptophan from chorismate: step 1/5. Feedback inhibited by tryptophan. Functionally, part of a heterotetrameric complex that catalyzes the two-step biosynthesis of anthranilate, an intermediate in the biosynthesis of L-tryptophan. In the first step, the glutamine-binding beta subunit (TrpG) of anthranilate synthase (AS) provides the glutamine amidotransferase activity which generates ammonia as a substrate that, along with chorismate, is used in the second step, catalyzed by the large alpha subunit of AS (TrpE) to produce anthranilate. In the absence of TrpG, TrpE can synthesize anthranilate directly from chorismate and high concentrations of ammonia. The chain is Anthranilate synthase component 1 (trpE) from Cereibacter sphaeroides (strain ATCC 17023 / DSM 158 / JCM 6121 / CCUG 31486 / LMG 2827 / NBRC 12203 / NCIMB 8253 / ATH 2.4.1.) (Rhodobacter sphaeroides).